Reading from the N-terminus, the 161-residue chain is SsrA-binding protein (161 aa).

Residues 138–161 are disordered; it reads DKRTDSKEKDWNRDKARIMKSSLR. Residues 139–154 are compositionally biased toward basic and acidic residues; that stretch reads KRTDSKEKDWNRDKAR.

Belongs to the SmpB family.

It localises to the cytoplasm. Its function is as follows. Required for rescue of stalled ribosomes mediated by trans-translation. Binds to transfer-messenger RNA (tmRNA), required for stable association of tmRNA with ribosomes. tmRNA and SmpB together mimic tRNA shape, replacing the anticodon stem-loop with SmpB. tmRNA is encoded by the ssrA gene; the 2 termini fold to resemble tRNA(Ala) and it encodes a 'tag peptide', a short internal open reading frame. During trans-translation Ala-aminoacylated tmRNA acts like a tRNA, entering the A-site of stalled ribosomes, displacing the stalled mRNA. The ribosome then switches to translate the ORF on the tmRNA; the nascent peptide is terminated with the 'tag peptide' encoded by the tmRNA and targeted for degradation. The ribosome is freed to recommence translation, which seems to be the essential function of trans-translation. The polypeptide is SsrA-binding protein (Aliivibrio fischeri (strain ATCC 700601 / ES114) (Vibrio fischeri)).